A 109-amino-acid polypeptide reads, in one-letter code: Anti-sigma-B factor antagonist (109 aa).

The 107-residue stretch at 3–109 (INVDVKQNEN…ISAKSEGGVQ (107 aa)) folds into the STAS domain. Ser-52 and Ser-56 each carry phosphoserine. Thr-57 is subject to Phosphothreonine.

The protein belongs to the anti-sigma-factor antagonist family. Monomer. In stressed cells, forms a complex with RsbW. The predominant form of this complex has a stoichiometry of 2:2 (one dimer of RsbW is bound by two monomers of RsbV). Binds to RsbW in the presence of low levels of ATP or under conditions of energy or environmental stress (through dephosphorylation by RsbP or RsbU). In terms of processing, phosphorylated by RsbW on a serine residue. Dephosphorylated by RsbP or RsbU.

Its function is as follows. Positive regulator of sigma-B activity. Non-phosphorylated RsbV binds to RsbW, preventing its association with sigma-B. When phosphorylated, releases RsbW, which is then free to complex with and inactivate sigma-B. The sequence is that of Anti-sigma-B factor antagonist (rsbV) from Bacillus subtilis (strain 168).